The following is a 158-amino-acid chain: NKG2-F type II integral membrane protein (158 aa).

The segment covering 1 to 12 has biased composition (polar residues); it reads MNKQRGTYSEVS. Positions 1-25 are disordered; it reads MNKQRGTYSEVSLAQDPKRQQRKLK. Over 1 to 74 the chain is Cytoplasmic; it reads MNKQRGTYSE…LPPPEKLTAE (74 aa). Residues 75-95 form a helical; Signal-anchor for type II membrane protein membrane-spanning segment; that stretch reads VLGIICIVLMATVLKTIVLIP. The Extracellular portion of the chain corresponds to 96–158; the sequence is CIGVLEQNNF…VLRRTLICFL (63 aa).

In terms of assembly, can form disulfide-bonded heterodimer with CD94. In terms of tissue distribution, natural killer cells.

It is found in the membrane. May play a role as a receptor for the recognition of MHC class I HLA-E molecules by NK cells. The chain is NKG2-F type II integral membrane protein (KLRC4) from Homo sapiens (Human).